We begin with the raw amino-acid sequence, 163 residues long: ADP-ribosylation factor-like protein 2-binding protein (163 aa).

This sequence belongs to the ARL2BP family. In terms of assembly, interacts with GTP bound ARL2 and ARL3; the complex ARL2-ARL2BP as well as ARL2BP alone, binds to SLC25A4/ANT1. Interaction with ARL2 may be required for targeting to cilia basal body. Interacts with STAT3; interaction is enhanced with ARL2. Found in a complex with ARL2, ARL2BP and SLC25A4. Interacts with STAT2, STAT3 and STAT4. Found in a complex with ARL2BP, ARL2 and SLC25A6. As to expression, expressed in brain.

It localises to the cytoplasm. The protein resides in the mitochondrion intermembrane space. It is found in the cytoskeleton. The protein localises to the microtubule organizing center. Its subcellular location is the centrosome. It localises to the nucleus. The protein resides in the spindle. It is found in the cilium basal body. Its function is as follows. Together with ARL2, plays a role in the nuclear translocation, retention and transcriptional activity of STAT3. May play a role as an effector of ARL2. This chain is ADP-ribosylation factor-like protein 2-binding protein (ARL2BP), found in Bos taurus (Bovine).